A 168-amino-acid polypeptide reads, in one-letter code: ATP synthase subunit b (168 aa).

The helical transmembrane segment at 7 to 26 (FVLSNFIFTLINLWIMYWVL) threads the bilayer.

It belongs to the ATPase B chain family. F-type ATPases have 2 components, F(1) - the catalytic core - and F(0) - the membrane proton channel. F(1) has five subunits: alpha(3), beta(3), gamma(1), delta(1), epsilon(1). F(0) has three main subunits: a(1), b(2) and c(10-14). The alpha and beta chains form an alternating ring which encloses part of the gamma chain. F(1) is attached to F(0) by a central stalk formed by the gamma and epsilon chains, while a peripheral stalk is formed by the delta and b chains.

It localises to the cell membrane. Functionally, f(1)F(0) ATP synthase produces ATP from ADP in the presence of a proton or sodium gradient. F-type ATPases consist of two structural domains, F(1) containing the extramembraneous catalytic core and F(0) containing the membrane proton channel, linked together by a central stalk and a peripheral stalk. During catalysis, ATP synthesis in the catalytic domain of F(1) is coupled via a rotary mechanism of the central stalk subunits to proton translocation. Its function is as follows. Component of the F(0) channel, it forms part of the peripheral stalk, linking F(1) to F(0). The protein is ATP synthase subunit b of Alkaliphilus metalliredigens (strain QYMF).